The sequence spans 537 residues: Prolyl 4-hydroxylase subunit alpha-2 (537 aa).

The first 23 residues, 1 to 23 (MKLQVLVLVLLMSWFGVLSWVQA), serve as a signal peptide directing secretion. N-linked (GlcNAc...) asparagine glycosylation occurs at Asn117. A TPR repeat occupies 209–242 (SLVLDYLSYAVFQLGDLHRAVELTRRLLSLDPSH). N-linked (GlcNAc...) asparagine glycosylation occurs at Asn266. Residues 414–522 (TAELLQVANY…KWVSNKWFHE (109 aa)) enclose the Fe2OG dioxygenase domain. Residues His432 and Asp434 each coordinate Fe cation. An N6-succinyllysine modification is found at Lys482. A Fe cation-binding site is contributed by His503. Residue Lys513 participates in 2-oxoglutarate binding.

This sequence belongs to the P4HA family. As to quaternary structure, heterotetramer of two alpha-2 chains and two beta chains (P4HB) (the beta chain is the multi-functional PDI), where P4HB plays the role of a structural subunit; this tetramer catalyzes the formation of 4-hydroxyproline in collagen. Fe(2+) serves as cofactor. L-ascorbate is required as a cofactor. As to expression, expressed at least in brain, heart and lung.

It is found in the endoplasmic reticulum lumen. The catalysed reaction is L-prolyl-[collagen] + 2-oxoglutarate + O2 = trans-4-hydroxy-L-prolyl-[collagen] + succinate + CO2. Inhibited by poly(L-proline) only at very high concentrations. Its function is as follows. Catalyzes the post-translational formation of 4-hydroxyproline in -Xaa-Pro-Gly- sequences in collagens and other proteins. This chain is Prolyl 4-hydroxylase subunit alpha-2 (P4ha2), found in Mus musculus (Mouse).